A 213-amino-acid chain; its full sequence is Flagellar transcriptional regulator FlhC (213 aa).

Zn(2+)-binding residues include Cys-138, Cys-141, Cys-158, and Cys-161.

Belongs to the FlhC family. In terms of assembly, heterohexamer composed of two FlhC and four FlhD subunits. Each FlhC binds a FlhD dimer, forming a heterotrimer, and a hexamer assembles by dimerization of two heterotrimers. The cofactor is Zn(2+).

It is found in the cytoplasm. In terms of biological role, functions in complex with FlhD as a master transcriptional regulator that regulates transcription of several flagellar and non-flagellar operons by binding to their promoter region. Activates expression of class 2 flagellar genes, including fliA, which is a flagellum-specific sigma factor that turns on the class 3 genes. Also regulates genes whose products function in a variety of physiological pathways. The chain is Flagellar transcriptional regulator FlhC from Cupriavidus metallidurans (strain ATCC 43123 / DSM 2839 / NBRC 102507 / CH34) (Ralstonia metallidurans).